Consider the following 477-residue polypeptide: Tripartite motif-containing protein 72 (477 aa).

Zn(2+) contacts are provided by leucine 14, glutamine 17, proline 29, cysteine 31, threonine 34, glutamine 37, threonine 53, proline 56, glycine 86, leucine 89, valine 97, glutamate 100, leucine 105, glycine 108, glycine 114, and lysine 117. Residues 16–59 form an RING-type zinc finger; sequence CQLCLELFRAPVTPECGHTFCQGCLTGVPKNQDQNGSTPCPTCQ. A B box-type zinc finger spans residues 83–124; sequence VPQGHCLEHMDPLSVYCEQDKELICGVCASLGKHKGHNIITA. Residues 135-232 are a coiled coil; it reads LPQQQVILQE…QMEGVLKDVE (98 aa). A B30.2/SPRY domain is found at 272-476; sequence DEFKFQVWRK…LKIFYPPAEQ (205 aa).

It belongs to the TRIM/RBCC family. As to quaternary structure, homodimer. Homooligomer; disulfide-linked. Oligomerizes on the phospholipid membrane. Post-translationally, disulfide bond formation at Cys-244 occurs in case of membrane damage that cause the entry of the oxidized milieu of the extracellular space, resulting in homooligomerization.

The protein resides in the cell membrane. Its subcellular location is the sarcolemma. It is found in the cytoplasmic vesicle membrane. The catalysed reaction is S-ubiquitinyl-[E2 ubiquitin-conjugating enzyme]-L-cysteine + [acceptor protein]-L-lysine = [E2 ubiquitin-conjugating enzyme]-L-cysteine + N(6)-ubiquitinyl-[acceptor protein]-L-lysine.. Its pathway is protein modification; protein ubiquitination. With respect to regulation, specifically binds phosphatidylserine. The binding to phospholipids enhances ubiquitination activity. Its function is as follows. Muscle-specific E3 ubiquitin-protein ligase that plays a central role in cell membrane repair by nucleating the assembly of the repair machinery at injury sites. Acts as a sensor of oxidation: upon membrane damage, entry of extracellular oxidative environment results in disulfide bond formation and homooligomerization at the injury site. This oligomerization acts as a nucleation site for recruitment of TRIM72-containing vesicles to the injury site, leading to membrane patch formation. Probably acts upstream of the Ca(2+)-dependent membrane resealing process. Required for transport of DYSF to sites of cell injury during repair patch formation. Regulates membrane budding and exocytosis. May be involved in the regulation of the mobility of KCNB1-containing endocytic vesicles. The chain is Tripartite motif-containing protein 72 (trim72) from Xenopus laevis (African clawed frog).